The sequence spans 431 residues: Argininosuccinate lyase (431 aa).

This sequence belongs to the lyase 1 family. Argininosuccinate lyase subfamily.

Its subcellular location is the cytoplasm. The catalysed reaction is 2-(N(omega)-L-arginino)succinate = fumarate + L-arginine. It functions in the pathway amino-acid biosynthesis; L-arginine biosynthesis; L-arginine from L-ornithine and carbamoyl phosphate: step 3/3. The protein is Argininosuccinate lyase of Stenotrophomonas maltophilia (strain R551-3).